A 579-amino-acid chain; its full sequence is 2-isopropylmalate synthase (579 aa).

Residues 33–308 enclose the Pyruvate carboxyltransferase domain; it reads PRWLSTDLRD…DPGIDFSDIN (276 aa). Aspartate 42, histidine 247, histidine 249, and asparagine 283 together coordinate Mg(2+). Positions 450–579 are regulatory domain; sequence SSDLPVPLAS…IVAPLVAAGR (130 aa).

The protein belongs to the alpha-IPM synthase/homocitrate synthase family. LeuA type 2 subfamily. In terms of assembly, homodimer. Requires Mg(2+) as cofactor.

The protein resides in the cytoplasm. It catalyses the reaction 3-methyl-2-oxobutanoate + acetyl-CoA + H2O = (2S)-2-isopropylmalate + CoA + H(+). The protein operates within amino-acid biosynthesis; L-leucine biosynthesis; L-leucine from 3-methyl-2-oxobutanoate: step 1/4. Functionally, catalyzes the condensation of the acetyl group of acetyl-CoA with 3-methyl-2-oxobutanoate (2-ketoisovalerate) to form 3-carboxy-3-hydroxy-4-methylpentanoate (2-isopropylmalate). This Streptosporangium roseum (strain ATCC 12428 / DSM 43021 / JCM 3005 / KCTC 9067 / NCIMB 10171 / NRRL 2505 / NI 9100) protein is 2-isopropylmalate synthase.